The chain runs to 351 residues: Cytosolic sulfotransferase 11 (351 aa).

98-103 (KGGTTW) contacts 3'-phosphoadenylyl sulfate. Catalysis depends on H163, which acts as the Proton acceptor. 3'-phosphoadenylyl sulfate is bound by residues R184, S192, Y250, and 316 to 318 (RKG).

Belongs to the sulfotransferase 1 family.

The protein resides in the cytoplasm. In terms of biological role, sulfotransferase that utilizes 3'-phospho-5'-adenylyl sulfate (PAPS) as sulfonate donor. The chain is Cytosolic sulfotransferase 11 (SOT11) from Arabidopsis thaliana (Mouse-ear cress).